Reading from the N-terminus, the 100-residue chain is Mitochondrial import inner membrane translocase subunit Tim10 B (100 aa).

The Twin CX3C motif motif lies at C25–C49. 2 disulfide bridges follow: C25–C49 and C29–C45.

Belongs to the small Tim family. In terms of assembly, component of the TIM22 complex, which core is composed of TIMM22, associated with TIMM10 (TIMM10A and/or TIMM10B), TIMM9, AGK and TIMM29.

The protein localises to the mitochondrion inner membrane. In terms of biological role, component of the TIM22 complex, a complex that mediates the import and insertion of multi-pass transmembrane proteins into the mitochondrial inner membrane. The TIM22 complex forms a twin-pore translocase that uses the membrane potential as the external driving force. In the TIM22 complex, it may act as a docking point for the soluble 70 kDa complex that guides the target proteins in transit through the aqueous mitochondrial intermembrane space. In Rattus norvegicus (Rat), this protein is Mitochondrial import inner membrane translocase subunit Tim10 B (Timm10b).